Reading from the N-terminus, the 363-residue chain is NAD(P)H-quinone oxidoreductase subunit 1, chloroplastic (363 aa).

6 consecutive transmembrane segments (helical) span residues 26–46 (IIWV…GVLV), 98–118 (FSIG…VIPF), 127–147 (LSIG…GLLM), 253–273 (FGLF…FVTV), 300–320 (VFGT…FLFI), and 336–356 (LLNL…LLTT).

It belongs to the complex I subunit 1 family. As to quaternary structure, NDH is composed of at least 16 different subunits, 5 of which are encoded in the nucleus.

The protein resides in the plastid. Its subcellular location is the chloroplast thylakoid membrane. The catalysed reaction is a plastoquinone + NADH + (n+1) H(+)(in) = a plastoquinol + NAD(+) + n H(+)(out). It carries out the reaction a plastoquinone + NADPH + (n+1) H(+)(in) = a plastoquinol + NADP(+) + n H(+)(out). Functionally, NDH shuttles electrons from NAD(P)H:plastoquinone, via FMN and iron-sulfur (Fe-S) centers, to quinones in the photosynthetic chain and possibly in a chloroplast respiratory chain. The immediate electron acceptor for the enzyme in this species is believed to be plastoquinone. Couples the redox reaction to proton translocation, and thus conserves the redox energy in a proton gradient. The chain is NAD(P)H-quinone oxidoreductase subunit 1, chloroplastic from Helianthus annuus (Common sunflower).